The chain runs to 151 residues: Transcriptional regulator MraZ (151 aa).

SpoVT-AbrB domains are found at residues 5–52 (ANAI…PLDE) and 81–124 (AVDL…DEDA).

Belongs to the MraZ family. In terms of assembly, forms oligomers.

The protein resides in the cytoplasm. It is found in the nucleoid. The sequence is that of Transcriptional regulator MraZ from Pseudomonas fluorescens (strain Pf0-1).